We begin with the raw amino-acid sequence, 104 residues long: MQKIRRDDEIIVIAGKDKGKRGKVLKVLADDRLVVSGVNLIKRHSKPNPMLGVQGGIVEKEAPLHVSNVAIFNAETSKADRVGFKIEDGKKIRIFKSTQKPVDA.

This sequence belongs to the universal ribosomal protein uL24 family. As to quaternary structure, part of the 50S ribosomal subunit.

One of two assembly initiator proteins, it binds directly to the 5'-end of the 23S rRNA, where it nucleates assembly of the 50S subunit. Functionally, one of the proteins that surrounds the polypeptide exit tunnel on the outside of the subunit. In Azotobacter vinelandii (strain DJ / ATCC BAA-1303), this protein is Large ribosomal subunit protein uL24.